Consider the following 48-residue polypeptide: MSGKRVLACDICKSRNYSVTSAKKSDTRLTVKKFCKRCNGHTLHVETR.

The protein belongs to the bacterial ribosomal protein bL33 family.

This is Large ribosomal subunit protein bL33A from Shouchella clausii (strain KSM-K16) (Alkalihalobacillus clausii).